The chain runs to 81 residues: Photosystem I iron-sulfur center (81 aa).

4Fe-4S ferredoxin-type domains follow at residues 2–31 and 39–68; these read AHSV…MVPW and IASA…VRVY. [4Fe-4S] cluster-binding residues include Cys-11, Cys-14, Cys-17, Cys-21, Cys-48, Cys-51, Cys-54, and Cys-58.

As to quaternary structure, the eukaryotic PSI reaction center is composed of at least 11 subunits. [4Fe-4S] cluster serves as cofactor.

It localises to the plastid. Its subcellular location is the chloroplast thylakoid membrane. It catalyses the reaction reduced [plastocyanin] + hnu + oxidized [2Fe-2S]-[ferredoxin] = oxidized [plastocyanin] + reduced [2Fe-2S]-[ferredoxin]. Functionally, apoprotein for the two 4Fe-4S centers FA and FB of photosystem I (PSI); essential for photochemical activity. FB is the terminal electron acceptor of PSI, donating electrons to ferredoxin. The C-terminus interacts with PsaA/B/D and helps assemble the protein into the PSI complex. Required for binding of PsaD and PsaE to PSI. PSI is a plastocyanin-ferredoxin oxidoreductase, converting photonic excitation into a charge separation, which transfers an electron from the donor P700 chlorophyll pair to the spectroscopically characterized acceptors A0, A1, FX, FA and FB in turn. The polypeptide is Photosystem I iron-sulfur center (Mesostigma viride (Green alga)).